The sequence spans 380 residues: Outer membrane protein assembly factor BamB (380 aa).

The first 18 residues, 1–18 (MVQWKHAALLALALAVVG), serve as a signal peptide directing secretion. C19 is lipidated: N-palmitoyl cysteine. C19 is lipidated: S-diacylglycerol cysteine.

It belongs to the BamB family. In terms of assembly, part of the Bam complex.

The protein localises to the cell outer membrane. In terms of biological role, part of the outer membrane protein assembly complex, which is involved in assembly and insertion of beta-barrel proteins into the outer membrane. The chain is Outer membrane protein assembly factor BamB from Pseudomonas aeruginosa (strain ATCC 15692 / DSM 22644 / CIP 104116 / JCM 14847 / LMG 12228 / 1C / PRS 101 / PAO1).